We begin with the raw amino-acid sequence, 252 residues long: Large ribosomal subunit protein uL4 (252 aa).

Belongs to the universal ribosomal protein uL4 family. As to quaternary structure, part of the 50S ribosomal subunit.

Its function is as follows. One of the primary rRNA binding proteins, this protein initially binds near the 5'-end of the 23S rRNA. It is important during the early stages of 50S assembly. It makes multiple contacts with different domains of the 23S rRNA in the assembled 50S subunit and ribosome. Functionally, forms part of the polypeptide exit tunnel. This chain is Large ribosomal subunit protein uL4, found in Archaeoglobus fulgidus (strain ATCC 49558 / DSM 4304 / JCM 9628 / NBRC 100126 / VC-16).